The following is a 326-amino-acid chain: Cell surface glycoprotein CD200 receptor 1 (326 aa).

An N-terminal signal peptide occupies residues 1–25 (MFCFWRTSALAVLLIWGVFVAGSSC). Residues 26–238 (TDKNQTTQNN…SRGGNQSLRP (213 aa)) are Extracellular-facing. N-linked (GlcNAc...) asparagine glycosylation is found at asparagine 29, asparagine 34, asparagine 35, asparagine 44, asparagine 93, asparagine 101, asparagine 159, asparagine 192, asparagine 207, asparagine 221, and asparagine 233. An Ig-like V-type domain is found at 51–136 (IGTKALLCCF…YTCETVTPEG (86 aa)). Intrachain disulfides connect cysteine 58-cysteine 129 and cysteine 82-cysteine 97. An Ig-like C2-type domain is found at 138–229 (FEKNYDLQVL…GNQSLSIELS (92 aa)). 2 cysteine pairs are disulfide-bonded: cysteine 164–cysteine 213 and cysteine 183–cysteine 201. The helical transmembrane segment at 239-259 (YIPYIIPSIIILIIIGCICLL) threads the bilayer. At 260-326 (KISGFRKCKL…DCLTLSAIGI (67 aa)) the chain is on the cytoplasmic side.

The protein belongs to the CD200R family. CD200 and CD200R1 interact via their respective N-terminal Ig-like domains. Expressed in granulocytes, monocytes, most T-cells and a subset of NK, NKT and B-cells (at protein level). Expressed in the spleen, lung, liver, testis, bone marrow, lymph nodes, spinal cord, kidney, uterus and small intestine. Expressed in mast and dendritic cells. Expressed in the lung of N.brasiliensis-infected mice.

It is found in the cell membrane. Inhibitory receptor for the CD200/OX2 cell surface glycoprotein. Limits inflammation by inhibiting the expression of pro-inflammatory molecules including TNF-alpha, interferons, and inducible nitric oxide synthase (iNOS) in response to selected stimuli. The chain is Cell surface glycoprotein CD200 receptor 1 (Cd200r1) from Mus musculus (Mouse).